Consider the following 340-residue polypeptide: Peroxisomal coenzyme A diphosphatase 1, peroxisomal (340 aa).

A peroxisome-targeting transit peptide spans 1 to 7 (MILSQRR). In terms of domain architecture, Nudix hydrolase spans 37-199 (KRNSAVIILL…DEDVKSYQAE (163 aa)). The Nudix box signature appears at 77–99 (GKADYFQETFESVARREAEEEIG). Residues E93 and E97 each contribute to the Mg(2+) site.

Belongs to the Nudix hydrolase family. PCD1 subfamily. Mn(2+) is required as a cofactor. Mg(2+) serves as cofactor. Post-translationally, the size of the cleaved transit peptide can be of 7 or 8 residues.

It localises to the peroxisome. It catalyses the reaction CoA + H2O = (R)-4'-phosphopantetheine + adenosine 3',5'-bisphosphate + 2 H(+). It carries out the reaction CoA-disulfide + H2O = 4'-phosphopantetheinyl-CoA disulfide + adenosine 3',5'-bisphosphate + 2 H(+). The catalysed reaction is 8-oxo-dGTP + H2O = 8-oxo-dGMP + diphosphate + H(+). The enzyme catalyses 2-oxo-dATP + H2O = 2-oxo-dAMP + diphosphate + H(+). In terms of biological role, diphosphatase (pyrophosphatase) with specificity for coenzyme A and CoA derivatives. Catalyzes the hydrolysis of the diphosphate linkage in CoA to give 3',5'-ADP and 4'-phosphopantetheine. Prefers oxidized CoA disulfide (CoASSCoA) over CoA as a substrate. May be required to remove potentially toxic oxidized CoA disulfide from peroxisomes to maintain the capacity for beta-oxidation of fatty acids. Can also hydrolyze 8-oxo-dGTP and 2-OH-dATP in vitro; therefore it may function as a sanitizing enzyme for oxidized nucleotides and may contribute to prevention of spontaneous mutagenesis due to the misincorporation of these oxidized nucleotides during DNA synthesis. Shows moderate activity in vitro with several short chain acyl-CoA esters and very low activity on 3'-dephospho-CoA while is not active with (deoxy)nucleoside 5'-triphosphates, nucleoside 5'-di- or monophosphates, diadenosine polyphosphates, nucleoside 5'-diphosphosugars, cytidine 5'-diphosphoalcohols, NAD(+), NADH, or FAD. The protein is Peroxisomal coenzyme A diphosphatase 1, peroxisomal (PCD1) of Saccharomyces cerevisiae (strain ATCC 204508 / S288c) (Baker's yeast).